The chain runs to 634 residues: 1-deoxy-D-xylulose-5-phosphate synthase (634 aa).

Thiamine diphosphate is bound by residues His-74 and 115-117; that span reads AHS. Asp-146 provides a ligand contact to Mg(2+). Thiamine diphosphate-binding positions include 147-148, Asn-176, Tyr-283, and Glu-365; that span reads GA. Residue Asn-176 participates in Mg(2+) binding.

The protein belongs to the transketolase family. DXPS subfamily. In terms of assembly, homodimer. The cofactor is Mg(2+). Thiamine diphosphate serves as cofactor.

It carries out the reaction D-glyceraldehyde 3-phosphate + pyruvate + H(+) = 1-deoxy-D-xylulose 5-phosphate + CO2. It participates in metabolic intermediate biosynthesis; 1-deoxy-D-xylulose 5-phosphate biosynthesis; 1-deoxy-D-xylulose 5-phosphate from D-glyceraldehyde 3-phosphate and pyruvate: step 1/1. Catalyzes the acyloin condensation reaction between C atoms 2 and 3 of pyruvate and glyceraldehyde 3-phosphate to yield 1-deoxy-D-xylulose-5-phosphate (DXP). This Burkholderia orbicola (strain MC0-3) protein is 1-deoxy-D-xylulose-5-phosphate synthase.